The following is a 680-amino-acid chain: Transketolase 1 (680 aa).

Substrate is bound at residue His30. Thiamine diphosphate-binding positions include His69 and 116–118 (GPL). Asp157 is a binding site for Mg(2+). 2 residues coordinate thiamine diphosphate: Gly158 and Asn187. Asn187 and Ile189 together coordinate Mg(2+). His263 is a substrate binding site. His263 serves as a coordination point for thiamine diphosphate. A phosphoserine mark is found at Ser286 and Ser335. Arg359 and Ser386 together coordinate substrate. Ser402 is subject to Phosphoserine. Thiamine diphosphate contacts are provided by Glu418 and Phe445. Glu418 functions as the Proton donor in the catalytic mechanism. Residues His469 and Asp477 each coordinate substrate. Ser492 is subject to Phosphoserine. Arg528 contacts substrate. Residue Lys647 forms a Glycyl lysine isopeptide (Lys-Gly) (interchain with G-Cter in ubiquitin) linkage.

It belongs to the transketolase family. In terms of assembly, homodimer. Mg(2+) is required as a cofactor. Ca(2+) serves as cofactor. The cofactor is Mn(2+). Requires Co(2+) as cofactor. It depends on thiamine diphosphate as a cofactor.

It catalyses the reaction D-sedoheptulose 7-phosphate + D-glyceraldehyde 3-phosphate = aldehydo-D-ribose 5-phosphate + D-xylulose 5-phosphate. Its function is as follows. Catalyzes the transfer of a two-carbon ketol group from a ketose donor to an aldose acceptor, via a covalent intermediate with the cofactor thiamine pyrophosphate. In Saccharomyces cerevisiae (strain ATCC 204508 / S288c) (Baker's yeast), this protein is Transketolase 1 (TKL1).